We begin with the raw amino-acid sequence, 523 residues long: Protein disulfide-isomerase (523 aa).

Residues Met1–Ala22 form the signal peptide. A Thioredoxin 1 domain is found at Asp24–Pro137. Catalysis depends on nucleophile residues Cys59 and Cys62. Residues Cys59 and Cys62 are joined by a disulfide bond. Asn170 is a glycosylation site (N-linked (GlcNAc...) asparagine). The region spanning Val344–Lys475 is the Thioredoxin 2 domain. Cysteines 394 and 397 form a disulfide. Basic and acidic residues-rich tracts occupy residues Val478–Ala502 and Ser512–Leu523. Residues Val478–Leu523 form a disordered region. Residues His520–Leu523 carry the Prevents secretion from ER motif.

This sequence belongs to the protein disulfide isomerase family.

It localises to the endoplasmic reticulum lumen. It carries out the reaction Catalyzes the rearrangement of -S-S- bonds in proteins.. Functionally, participates in the folding of proteins containing disulfide bonds, may be involved in glycosylation, prolyl hydroxylation and triglyceride transfer. The protein is Protein disulfide-isomerase of Arthroderma benhamiae (strain ATCC MYA-4681 / CBS 112371) (Trichophyton mentagrophytes).